The chain runs to 651 residues: Intraflagellar transport protein 70A (651 aa).

TPR repeat units lie at residues Asp-8 to Ser-41, Arg-42 to Val-75, Pro-140 to Lys-173, Asp-175 to Glu-207, Leu-372 to Thr-405, Ile-410 to His-443, and Ile-445 to Asn-478. The stretch at Tyr-494 to Asn-521 forms a coiled coil. The TPR 8 repeat unit spans residues Cys-530–Lys-563.

Belongs to the TTC30/dfy-1/fleer family.

Its subcellular location is the cell projection. It is found in the cilium. Functionally, required for polyglutamylation of axonemal tubulin. Plays a role in anterograde intraflagellar transport (IFT), the process by which cilia precursors are transported from the base of the cilium to the site of their incorporation at the tip. The chain is Intraflagellar transport protein 70A (ift70a) from Xenopus laevis (African clawed frog).